The sequence spans 353 residues: Glutamine synthetase nodule isozyme (353 aa).

The region spanning 19–99 (IIAEYIWVGG…VMCDTYTPAG (81 aa)) is the GS beta-grasp domain. Residues 106–353 (KRHAAAKIFS…TSMIAETTLL (248 aa)) enclose the GS catalytic domain.

This sequence belongs to the glutamine synthetase family. As to quaternary structure, homooctamer.

It localises to the cytoplasm. It catalyses the reaction L-glutamate + NH4(+) + ATP = L-glutamine + ADP + phosphate + H(+). This chain is Glutamine synthetase nodule isozyme, found in Lupinus luteus (European yellow lupine).